The chain runs to 150 residues: uncharacterized protein (150 aa).

4 consecutive transmembrane segments (helical) span residues 12-30 (IVQRIISLLTIILLAYFLF), 40-62 (RLLSLATIVLLASFLFIIFLVLF), 74-96 (IRRTIAIVTTSFYFGTLSMVLSG), and 106-128 (ALIDGLKWAFMVVVAFYFGSRAV).

Its subcellular location is the cell membrane. This is an uncharacterized protein from Archaeoglobus fulgidus (strain ATCC 49558 / DSM 4304 / JCM 9628 / NBRC 100126 / VC-16).